Reading from the N-terminus, the 51-residue chain is Structural protein ORF5a (51 aa).

A helical membrane pass occupies residues 11-28; sequence RGLLLAIAFFVVYRAVLF.

The protein belongs to the arteriviridae ORF5a protein family. Interacts with GP2b and GP4.

Its subcellular location is the virion. It is found in the host cell membrane. In terms of biological role, minor virion component that plays an essential role in virus infectivity. The polypeptide is Structural protein ORF5a (Porcine reproductive and respiratory syndrome virus (strain VR-2332) (PRRSV)).